A 62-amino-acid chain; its full sequence is Photosystem II reaction center protein Z (62 aa).

A run of 2 helical transmembrane segments spans residues 8–28 and 41–61; these read AVFALIATSSILLIGVPVVFA and FSGTSLWIGLVFLVGILNSLI.

Belongs to the PsbZ family. As to quaternary structure, PSII is composed of 1 copy each of membrane proteins PsbA, PsbB, PsbC, PsbD, PsbE, PsbF, PsbH, PsbI, PsbJ, PsbK, PsbL, PsbM, PsbT, PsbY, PsbZ, Psb30/Ycf12, at least 3 peripheral proteins of the oxygen-evolving complex and a large number of cofactors. It forms dimeric complexes.

Its subcellular location is the plastid. It localises to the chloroplast thylakoid membrane. Its function is as follows. May control the interaction of photosystem II (PSII) cores with the light-harvesting antenna, regulates electron flow through the 2 photosystem reaction centers. PSII is a light-driven water plastoquinone oxidoreductase, using light energy to abstract electrons from H(2)O, generating a proton gradient subsequently used for ATP formation. This chain is Photosystem II reaction center protein Z, found in Panax ginseng (Korean ginseng).